The primary structure comprises 221 residues: Glutathione S-transferase A3 (221 aa).

N-acetylalanine is present on Ala-2. A GST N-terminal domain is found at 3 to 83 (GKPVLHYFDG…YIASKYNLYG (81 aa)). The residue at position 4 (Lys-4) is an N6-succinyllysine. Residues Tyr-9, Arg-45, 54–55 (QV), and 67–68 (QT) each bind glutathione. Residues 85-207 (DMKERAIIDM…LQPGSQRKPF (123 aa)) enclose the GST C-terminal domain.

As to quaternary structure, homodimer.

The protein localises to the cytoplasm. It catalyses the reaction RX + glutathione = an S-substituted glutathione + a halide anion + H(+). The catalysed reaction is androst-5-ene-3,17-dione = androst-4-ene-3,17-dione. It carries out the reaction pregn-5-ene-3,20-dione = progesterone. Its function is as follows. Conjugation of reduced glutathione to a wide number of exogenous and endogenous hydrophobic electrophiles. Catalyzes isomerization reactions that contribute to the biosynthesis of steroid hormones. Efficiently catalyze obligatory double-bond isomerizations of delta(5)-androstene-3,17-dione and delta(5)-pregnene-3,20-dione, precursors to testosterone and progesterone, respectively. Has a high catalytic activity for aflatoxin B1-8,9 epoxide. The polypeptide is Glutathione S-transferase A3 (Mus musculus (Mouse)).